Reading from the N-terminus, the 835-residue chain is Peptide transporter family 1 (835 aa).

The next 11 membrane-spanning stretches (helical) occupy residues 86–106, 113–133, 150–170, 183–203, 222–242, 325–345, 368–388, 401–421, 697–717, 738–758, and 765–785; these read IFFN…SIVA, FWTI…LALA, GLLI…AFGG, LFFS…TFIS, FGIP…GSFW, MFLP…VWLI, LNAV…YPVA, VTGG…QLQV, ILWQ…FSIT, WLLT…LNLF, and FFVY…LSIF. The interval 814 to 835 is disordered; it reads PRYSIDNKGFHPDEKDTFDMHF. The span at 821-835 shows a compositional bias: basic and acidic residues; the sequence is KGFHPDEKDTFDMHF.

Belongs to the major facilitator superfamily. Proton-dependent oligopeptide transporter (POT/PTR) (TC 2.A.17) family. Expressed specifically in the intestine.

It localises to the apical cell membrane. Its function is as follows. Low-affinity peptide transporter that is necessary for proton-dependent uptake of di- or tripeptides, and to a minor extent tetrapeptides, in the intestine. Transport is independent of sodium and chloride ions. Controls the uptake of dietary fatty acids, plays a role in fatty acid synthesis and is responsible for dipeptide-induced acidification of the intestine. Regulates cellular pH differences together with the antiporter protein, nhx-2. Amino acid uptake and absorption levels influence the insulin signaling/daf-2 and let-363/TOR pathways, subsequently affecting the stress response and longevity of the organism. It is required for the uptake of the L-enantiomers of various amino acids, including L-glutamate. In response to the availability of amino acid nutrients, may play a role in promoting reproduction and fertility. The protein is Peptide transporter family 1 of Caenorhabditis elegans.